The following is a 604-amino-acid chain: Glucose oxidase 2 (604 aa).

The signal sequence occupies residues 1 to 16 (MKLLGLLSGLVVVATA). Residues leucine 49 and threonine 50 each coordinate FAD. Residue asparagine 63 is glycosylated (N-linked (GlcNAc...) asparagine). Glutamate 70 contributes to the FAD binding site. An N-linked (GlcNAc...) asparagine glycan is attached at asparagine 109. FAD is bound by residues serine 123, asparagine 127, glycine 128, and serine 130. Cysteine 184 and cysteine 226 are disulfide-bonded. The N-linked (GlcNAc...) asparagine glycan is linked to asparagine 214. Valine 270 serves as a coordination point for FAD. 3 N-linked (GlcNAc...) asparagine glycosylation sites follow: asparagine 375, asparagine 408, and asparagine 517. Catalysis depends on histidine 536, which acts as the Proton acceptor. Arginine 557 and valine 558 together coordinate O2. FAD is bound by residues glycine 569 and methionine 581. Asparagine 600 is a glycosylation site (N-linked (GlcNAc...) asparagine).

The protein belongs to the GMC oxidoreductase family. Homodimer. Requires FAD as cofactor.

It localises to the secreted. The protein resides in the cell wall. It is found in the cytoplasm. The protein localises to the extracellular space. Its subcellular location is the extracellular matrix. It carries out the reaction beta-D-glucose + O2 = D-glucono-1,5-lactone + H2O2. Functionally, glucose oxidase catalyzes the oxidation of beta-D-glucose to D-glucono-delta-lactone and hydrogen peroxide in the presence of molecular oxygen. D-glucono-delta-lactone is sequentially hydrolyzed by lactonase to D-gluconic acid, and the resulting hydrogen peroxide is hydrolyzed by catalase to oxygen and water. Acts as a key factor contributing to fungal disease of apple. The production of gluconic acid leads to host tissue acidification that enhances the expression of pectolytic enzymes and the establishment of conditions for necrotrophic development of P.expansum. The polypeptide is Glucose oxidase 2 (Penicillium expansum (Blue mold rot fungus)).